Consider the following 139-residue polypeptide: Fluoroacetyl-CoA thioesterase (139 aa).

Residues 40 to 50 (FATGFMVGLME) and glycine 69 contribute to the substrate site. Residues threonine 42 and glutamate 50 contribute to the active site. CoA contacts are provided by residues glycine 69 and 76 to 77 (HT). The active site involves histidine 76. A substrate-binding site is contributed by arginine 120.

As to quaternary structure, homodimer.

It carries out the reaction fluoroacetyl-CoA + H2O = fluoroacetate + CoA + H(+). Functionally, hydrolyzes fluoroacetyl-CoA before it can react with citrate synthase, and thus confers fluoroacetate resistance. Cannot use acetyl-CoA as substrate. This chain is Fluoroacetyl-CoA thioesterase (flK), found in Streptantibioticus cattleyicolor (Streptomyces cattleya).